A 424-amino-acid chain; its full sequence is Glutamyl-tRNA reductase (424 aa).

Substrate is bound by residues 51-54 (TCNR), Ser99, 104-106 (EDQ), and Gln110. Residue Cys52 is the Nucleophile of the active site. 179–184 (GTGEMG) lines the NADP(+) pocket.

Belongs to the glutamyl-tRNA reductase family. Homodimer.

The catalysed reaction is (S)-4-amino-5-oxopentanoate + tRNA(Glu) + NADP(+) = L-glutamyl-tRNA(Glu) + NADPH + H(+). The protein operates within porphyrin-containing compound metabolism; protoporphyrin-IX biosynthesis; 5-aminolevulinate from L-glutamyl-tRNA(Glu): step 1/2. In terms of biological role, catalyzes the NADPH-dependent reduction of glutamyl-tRNA(Glu) to glutamate 1-semialdehyde (GSA). The chain is Glutamyl-tRNA reductase from Methanospirillum hungatei JF-1 (strain ATCC 27890 / DSM 864 / NBRC 100397 / JF-1).